Consider the following 207-residue polypeptide: Urease accessory protein UreG (207 aa).

12-19 (GPVGAGKT) serves as a coordination point for GTP.

This sequence belongs to the SIMIBI class G3E GTPase family. UreG subfamily. In terms of assembly, homodimer. UreD, UreF and UreG form a complex that acts as a GTP-hydrolysis-dependent molecular chaperone, activating the urease apoprotein by helping to assemble the nickel containing metallocenter of UreC. The UreE protein probably delivers the nickel.

It localises to the cytoplasm. In terms of biological role, facilitates the functional incorporation of the urease nickel metallocenter. This process requires GTP hydrolysis, probably effectuated by UreG. The polypeptide is Urease accessory protein UreG (Cereibacter sphaeroides (strain ATCC 17023 / DSM 158 / JCM 6121 / CCUG 31486 / LMG 2827 / NBRC 12203 / NCIMB 8253 / ATH 2.4.1.) (Rhodobacter sphaeroides)).